Consider the following 303-residue polypeptide: Shikimate kinase 1, chloroplastic (303 aa).

The transit peptide at 1-66 (MEAAITQRIQ…QRRAVSPAVS (66 aa)) directs the protein to the chloroplast. 109 to 116 (GMMGSGKT) is a binding site for ATP. Mg(2+) is bound at residue threonine 116. Substrate contacts are provided by aspartate 134, arginine 159, and glycine 181. Arginine 220 contacts ATP.

This sequence belongs to the shikimate kinase family. As to quaternary structure, homodimer. Requires Mg(2+) as cofactor.

The protein localises to the plastid. It localises to the chloroplast. It carries out the reaction shikimate + ATP = 3-phosphoshikimate + ADP + H(+). It functions in the pathway metabolic intermediate biosynthesis; chorismate biosynthesis; chorismate from D-erythrose 4-phosphate and phosphoenolpyruvate: step 5/7. Functionally, catalyzes the specific phosphorylation of the 3-hydroxyl group of shikimic acid using ATP as a cosubstrate. This chain is Shikimate kinase 1, chloroplastic (SK1), found in Arabidopsis thaliana (Mouse-ear cress).